The sequence spans 495 residues: uncharacterized protein (495 aa).

Positions 337–360 (STSNRESDCSGNEDDSSNAKYAKK) are disordered.

This is an uncharacterized protein from Caenorhabditis elegans.